We begin with the raw amino-acid sequence, 75 residues long: Penaeidin-3l (75 aa).

An N-terminal signal peptide occupies residues 1 to 19 (MRLVVCLVFLASFALVCQG). Residue glutamine 20 is modified to Pyrrolidone carboxylic acid. 3 disulfide bridges follow: cysteine 44-cysteine 59, cysteine 48-cysteine 66, and cysteine 60-cysteine 67. Residue serine 74 is modified to Serine amide.

This sequence belongs to the penaeidin family.

The protein resides in the cytoplasmic granule. Antibacterial and antifungal activity. Presents chitin-binding activity. The polypeptide is Penaeidin-3l (Penaeus setiferus (Atlantic white shrimp)).